A 344-amino-acid chain; its full sequence is Lipase chaperone (344 aa).

Residues 14–34 (AVVYGVVGLAAIAGVAMWSGA) traverse the membrane as a helical segment.

This sequence belongs to the lipase chaperone family.

The protein resides in the cell inner membrane. Its function is as follows. May be involved in the folding of the extracellular lipase during its passage through the periplasm. This Burkholderia cepacia (Pseudomonas cepacia) protein is Lipase chaperone (lifO).